We begin with the raw amino-acid sequence, 389 residues long: Probable L-tyrosine/L-aspartate decarboxylase (389 aa).

Residue Lys-233 is modified to N6-(pyridoxal phosphate)lysine.

It belongs to the group II decarboxylase family. MfnA subfamily. Pyridoxal 5'-phosphate serves as cofactor.

It carries out the reaction L-tyrosine + H(+) = tyramine + CO2. The catalysed reaction is L-aspartate + H(+) = beta-alanine + CO2. Its pathway is cofactor biosynthesis; methanofuran biosynthesis. It participates in cofactor biosynthesis; coenzyme A biosynthesis. Functionally, catalyzes the decarboxylation of L-tyrosine to produce tyramine for methanofuran biosynthesis. Can also catalyze the decarboxylation of L-aspartate to produce beta-alanine for coenzyme A (CoA) biosynthesis. The sequence is that of Probable L-tyrosine/L-aspartate decarboxylase from Methanosphaera stadtmanae (strain ATCC 43021 / DSM 3091 / JCM 11832 / MCB-3).